A 235-amino-acid polypeptide reads, in one-letter code: Ubiquinone/menaquinone biosynthesis C-methyltransferase UbiE (235 aa).

S-adenosyl-L-methionine is bound by residues T59, D84, and S123.

The protein belongs to the class I-like SAM-binding methyltransferase superfamily. MenG/UbiE family.

The enzyme catalyses a 2-demethylmenaquinol + S-adenosyl-L-methionine = a menaquinol + S-adenosyl-L-homocysteine + H(+). It carries out the reaction a 2-methoxy-6-(all-trans-polyprenyl)benzene-1,4-diol + S-adenosyl-L-methionine = a 5-methoxy-2-methyl-3-(all-trans-polyprenyl)benzene-1,4-diol + S-adenosyl-L-homocysteine + H(+). It functions in the pathway quinol/quinone metabolism; menaquinone biosynthesis; menaquinol from 1,4-dihydroxy-2-naphthoate: step 2/2. It participates in cofactor biosynthesis; ubiquinone biosynthesis. Its function is as follows. Methyltransferase required for the conversion of demethylmenaquinol (DMKH2) to menaquinol (MKH2) and the conversion of 2-polyprenyl-6-methoxy-1,4-benzoquinol (DDMQH2) to 2-polyprenyl-3-methyl-6-methoxy-1,4-benzoquinol (DMQH2). This is Ubiquinone/menaquinone biosynthesis C-methyltransferase UbiE from Campylobacter jejuni subsp. jejuni serotype O:6 (strain 81116 / NCTC 11828).